We begin with the raw amino-acid sequence, 122 residues long: uncharacterized protein (122 aa).

Transmembrane regions (helical) follow at residues V21–I40, Y57–I77, and L94–Y114.

The protein resides in the membrane. This is an uncharacterized protein from Saccharomyces cerevisiae (strain ATCC 204508 / S288c) (Baker's yeast).